A 477-amino-acid polypeptide reads, in one-letter code: Glycogen synthase (477 aa).

ADP-alpha-D-glucose is bound at residue Lys15.

It belongs to the glycosyltransferase 1 family. Bacterial/plant glycogen synthase subfamily.

It catalyses the reaction [(1-&gt;4)-alpha-D-glucosyl](n) + ADP-alpha-D-glucose = [(1-&gt;4)-alpha-D-glucosyl](n+1) + ADP + H(+). The protein operates within glycan biosynthesis; glycogen biosynthesis. Its function is as follows. Synthesizes alpha-1,4-glucan chains using ADP-glucose. In Streptococcus pneumoniae serotype 19F (strain G54), this protein is Glycogen synthase.